The chain runs to 333 residues: T-cell surface glycoprotein CD1b1 (333 aa).

Residues 1–17 (MLLVALALLAFLFPAGD) form the signal peptide. Residues 18–302 (TQNALQWPTS…LYWGHSISIG (285 aa)) lie on the Extracellular side of the membrane. Asparagine 38, asparagine 75, and asparagine 146 each carry an N-linked (GlcNAc...) asparagine glycan. Intrachain disulfides connect cysteine 120–cysteine 184, cysteine 149–cysteine 163, and cysteine 224–cysteine 279. An Ig-like domain is found at 197–295 (PDIQKQVKPD…LEGQDIILYW (99 aa)). A helical membrane pass occupies residues 303–323 (WIILAVLVPCLIVLVLFVLWF). Residues 324–333 (YRRWSYEDIL) lie on the Cytoplasmic side of the membrane. Residues 329 to 332 (YEDI) carry the Internalization signal motif.

In terms of assembly, heterodimer with B2M (beta-2-microglobulin). Interacts with saposin C.

The protein resides in the cell membrane. It is found in the endosome membrane. Its subcellular location is the lysosome membrane. Antigen-presenting protein that binds self and non-self lipid and glycolipid antigens and presents them to T-cell receptors on natural killer T-cells. The protein is T-cell surface glycoprotein CD1b1 (CD1B1) of Cavia porcellus (Guinea pig).